The primary structure comprises 326 residues: Iron-sulfur cluster assembly SufBD family protein PH0883 (326 aa).

It belongs to the iron-sulfur cluster assembly SufBD family.

The chain is Iron-sulfur cluster assembly SufBD family protein PH0883 from Pyrococcus horikoshii (strain ATCC 700860 / DSM 12428 / JCM 9974 / NBRC 100139 / OT-3).